A 460-amino-acid polypeptide reads, in one-letter code: Indoleacetamide hydrolase (460 aa).

Residues Lys71 and Ser146 each act as charge relay system in the active site. The active-site Acyl-ester intermediate is the Ser169.

The protein belongs to the amidase family.

The protein operates within plant hormone metabolism; auxin biosynthesis. Hydrolyzes indole-3-acetamide (IAM) into indole-3-acetic acid (IAA). This Pantoea agglomerans pv. gypsophilae (Erwinia herbicola) protein is Indoleacetamide hydrolase (iaaH).